The following is a 487-amino-acid chain: ATP-dependent 6-phosphofructokinase (487 aa).

Residues G107, 173 to 174 (RG), 198 to 201 (GDGT), and K226 contribute to the ATP site. Position 199 (D199) interacts with Mg(2+). Substrate is bound by residues 227 to 229 (TID), 272 to 274 (MGR), and E325. The active-site Proton acceptor is D229. Residue 341–343 (SGN) coordinates ATP. Residue 380–383 (YMIR) participates in substrate binding. Positions 485-487 (AKL) match the Peroxisomal targeting signal motif.

It belongs to the phosphofructokinase type A (PFKA) family. PPi-dependent PFK group II subfamily. Atypical ATP-dependent clade 'X' sub-subfamily. In terms of assembly, homotetramer. Mg(2+) is required as a cofactor.

The protein localises to the glycosome. The enzyme catalyses beta-D-fructose 6-phosphate + ATP = beta-D-fructose 1,6-bisphosphate + ADP + H(+). Its pathway is carbohydrate degradation; glycolysis; D-glyceraldehyde 3-phosphate and glycerone phosphate from D-glucose: step 3/4. Allosterically activated by AMP. In terms of biological role, catalyzes the phosphorylation of D-fructose 6-phosphate to fructose 1,6-bisphosphate by ATP, the first committing step of glycolysis. This Trypanosoma brucei brucei protein is ATP-dependent 6-phosphofructokinase.